The sequence spans 862 residues: Kinesin-like protein KIN-7E (862 aa).

The 323-residue stretch at 24-346 (KILVLVRLRP…LLFACCAKEV (323 aa)) folds into the Kinesin motor domain. 110–117 (GQTSSGKT) lines the ATP pocket. The stretch at 355–428 (VMSDKALVKQ…RLEDFMKMVE (74 aa)) forms a coiled coil. Disordered stretches follow at residues 463–505 (RTSF…QSEE) and 542–632 (ANGE…TPLV). Polar residues predominate over residues 465–476 (SFISDGTSTPLS). Residues 494 to 505 (MSPRHSGDQSEE) show a composition bias toward basic and acidic residues. Polar residues predominate over residues 612 to 621 (DSMTSRGSDS). A Glycyl lysine isopeptide (Lys-Gly) (interchain with G-Cter in ubiquitin) cross-link involves residue K734.

Belongs to the TRAFAC class myosin-kinesin ATPase superfamily. Kinesin family. KIN-7 subfamily.

This Arabidopsis thaliana (Mouse-ear cress) protein is Kinesin-like protein KIN-7E.